The primary structure comprises 291 residues: ATP synthase gamma chain 2 (291 aa).

The segment at 187–208 (LLPHPDKDESQDSKPNDATSRW) is disordered. The segment covering 190–201 (HPDKDESQDSKP) has biased composition (basic and acidic residues).

This sequence belongs to the ATPase gamma chain family. In terms of assembly, F-type ATPases have 2 components, CF(1) - the catalytic core - and CF(0) - the membrane proton channel. CF(1) has five subunits: alpha(3), beta(3), gamma(1), delta(1), epsilon(1). CF(0) has three main subunits: a, b and c.

It is found in the cell inner membrane. In terms of biological role, produces ATP from ADP in the presence of a proton gradient across the membrane. The gamma chain is believed to be important in regulating ATPase activity and the flow of protons through the CF(0) complex. The protein is ATP synthase gamma chain 2 of Photobacterium profundum (strain SS9).